We begin with the raw amino-acid sequence, 453 residues long: Serine incorporator 1 (453 aa).

Gly-2 is lipidated: N-myristoyl glycine. At 2–39 (GSVLGLCSMASWIPCLCGSAPCLLCRCCPSGNNSTVTR) the chain is on the cytoplasmic side. The helical transmembrane segment at 40–60 (LIYALFLLVGVCVACVMLIPG) threads the bilayer. Over 61-88 (MEEQLNKIPGFCENEKGVVPCNILVGYK) the chain is Lumenal. Residues 89–109 (AVYRLCFGLAMFYLLLSLLMI) form a helical membrane-spanning segment. At 110–123 (KVKSSSDPRAAVHN) the chain is on the cytoplasmic side. The chain crosses the membrane as a helical span at residues 124-144 (GFWFFKFAAAIAIIIGAFFIP). Residues 145 to 151 (EGTFTTV) lie on the Lumenal side of the membrane. The helical transmembrane segment at 152–172 (WFYVGMAGAFCFILIQLVLLI) threads the bilayer. Residues 173-197 (DFAHSWNESWVEKMEEGNSRCWYAA) lie on the Cytoplasmic side of the membrane. A helical membrane pass occupies residues 198–218 (LLSATALNYLLSLVAIVLFFV). Over 219–231 (YYTHPASCSENKA) the chain is Lumenal. Residues 232–252 (FISVNMLLCIGASVMSILPKI) form a helical membrane-spanning segment. Residues 253–259 (QESQPRS) are Cytoplasmic-facing. The helical transmembrane segment at 260 to 280 (GLLQSSVITVYTMYLTWSAMT) threads the bilayer. Topologically, residues 281–309 (NEPETNCNPSLLSIIGYNTTSTVPKEGQS) are lumenal. A helical membrane pass occupies residues 310–330 (VQWWHAQGIIGLILFLLCVFY). Residues 331 to 387 (SSIRTSNNSQVNKLTLTSDESTLIEDGGARSDGSLEDGDDVHRAVDNERDGVTYSYS) lie on the Cytoplasmic side of the membrane. The residue at position 351 (Ser-351) is a Phosphoserine. Thr-352 bears the Phosphothreonine mark. 2 positions are modified to phosphoserine: Ser-361 and Ser-364. Residues 388-408 (FFHFMLFLASLYIMMTLTNWY) form a helical membrane-spanning segment. At 409-426 (RYEPSREMKSQWTAVWVK) the chain is on the lumenal side. A helical transmembrane segment spans residues 427-447 (ISSSWIGIVLYVWTLVAPLVL). Residues 448–453 (TNRDFD) lie on the Cytoplasmic side of the membrane.

The protein belongs to the TDE1 family. As to quaternary structure, interacts with SPTLC1.

It is found in the endoplasmic reticulum membrane. Its function is as follows. Enhances the incorporation of serine into phosphatidylserine and sphingolipids. The protein is Serine incorporator 1 (SERINC1) of Pongo abelii (Sumatran orangutan).